The sequence spans 906 residues: Cadherin-2 (906 aa).

Positions 1 to 25 (MCRIAGALRTLLPLLAALLQASVEA) are cleaved as a signal peptide. Residues 26–159 (SGEIALCKTG…HSGHLQRQKR (134 aa)) constitute a propeptide that is removed on maturation. Phosphoserine; by FAM20C is present on residues S96 and S135. 5 consecutive Cadherin domains span residues 160-267 (DWVI…RPEF), 268-382 (LHQV…PPEF), 383-497 (TAMT…NPYF), 498-603 (APNP…DNAP), and 604-714 (QVLP…DVDR). The Extracellular segment spans residues 160–724 (DWVIPPINLP…IVGAGLGTGA (565 aa)). Position 170 (E170) interacts with Ca(2+). An N-linked (GlcNAc...) asparagine glycan is attached at N190. Ca(2+)-binding residues include D226, E228, D259, M260, N261, D262, and N263. An N-linked (GlcNAc...) asparagine glycan is attached at N273. Ca(2+) contacts are provided by D293, D295, and N301. N-linked (GlcNAc...) asparagine glycosylation occurs at N325. D353 lines the Ca(2+) pocket. Residues N402, N572, N651, and N692 are each glycosylated (N-linked (GlcNAc...) asparagine). The chain crosses the membrane as a helical span at residues 725 to 745 (IIAILLCIIILLILVLMFVVW). The Cytoplasmic segment spans residues 746–906 (MKRRDKERQA…LADMYGGGDD (161 aa)). Over residues 863–880 (SGSTAGSLSSLNSSSSGG) the composition is skewed to low complexity. Positions 863–884 (SGSTAGSLSSLNSSSSGGEQDY) are disordered.

As to quaternary structure, homodimer (via extracellular region). Can also form heterodimers with other cadherins (via extracellular region). Dimerization occurs in trans, i.e. with a cadherin chain from another cell. Interacts with CDCP1. Interacts with PCDH8; this complex may also include TAOK2. The interaction with PCDH8 may lead to internalization through TAOK2/p38 MAPK pathway. Identified in a complex containing FGFR4, NCAM1, CDH2, PLCG1, FRS2, SRC, SHC1, GAP43 and CTTN. May interact with OBSCN (via protein kinase domain 2). Interacts with FBXO45. Post-translationally, cleaved by MMP24. Ectodomain cleavage leads to the generation of a soluble 90 kDa N-terminal soluble fragment and a 45 kDa membrane-bound C-terminal fragment 1 (CTF1), which is further cleaved by gamma-secretase into a 35 kDa. Cleavage in neural stem cells by MMP24 affects CDH2-mediated anchorage of neural stem cells to ependymocytes in the adult subependymal zone, leading to modulate neural stem cell quiescence. In terms of processing, may be phosphorylated by OBSCN.

The protein localises to the cell membrane. It is found in the sarcolemma. The protein resides in the cell junction. Its subcellular location is the cell surface. It localises to the desmosome. The protein localises to the adherens junction. In terms of biological role, calcium-dependent cell adhesion protein; preferentially mediates homotypic cell-cell adhesion by dimerization with a CDH2 chain from another cell. Cadherins may thus contribute to the sorting of heterogeneous cell types. Acts as a regulator of neural stem cells quiescence by mediating anchorage of neural stem cells to ependymocytes in the adult subependymal zone: upon cleavage by MMP24, CDH2-mediated anchorage is affected, leading to modulate neural stem cell quiescence. Plays a role in cell-to-cell junction formation between pancreatic beta cells and neural crest stem (NCS) cells, promoting the formation of processes by NCS cells. Required for proper neurite branching. Required for pre- and postsynaptic organization. CDH2 may be involved in neuronal recognition mechanism. In hippocampal neurons, may regulate dendritic spine density. In Homo sapiens (Human), this protein is Cadherin-2 (CDH2).